The following is a 355-amino-acid chain: UDP-N-acetylglucosamine--N-acetylmuramyl-(pentapeptide) pyrophosphoryl-undecaprenol N-acetylglucosamine transferase (355 aa).

Residues 14-16 (TGG), Asn-126, Arg-162, Ser-190, Ile-243, 262-267 (ALTVSE), and Gln-287 each bind UDP-N-acetyl-alpha-D-glucosamine.

This sequence belongs to the glycosyltransferase 28 family. MurG subfamily.

Its subcellular location is the cell inner membrane. The enzyme catalyses di-trans,octa-cis-undecaprenyl diphospho-N-acetyl-alpha-D-muramoyl-L-alanyl-D-glutamyl-meso-2,6-diaminopimeloyl-D-alanyl-D-alanine + UDP-N-acetyl-alpha-D-glucosamine = di-trans,octa-cis-undecaprenyl diphospho-[N-acetyl-alpha-D-glucosaminyl-(1-&gt;4)]-N-acetyl-alpha-D-muramoyl-L-alanyl-D-glutamyl-meso-2,6-diaminopimeloyl-D-alanyl-D-alanine + UDP + H(+). It participates in cell wall biogenesis; peptidoglycan biosynthesis. In terms of biological role, cell wall formation. Catalyzes the transfer of a GlcNAc subunit on undecaprenyl-pyrophosphoryl-MurNAc-pentapeptide (lipid intermediate I) to form undecaprenyl-pyrophosphoryl-MurNAc-(pentapeptide)GlcNAc (lipid intermediate II). This is UDP-N-acetylglucosamine--N-acetylmuramyl-(pentapeptide) pyrophosphoryl-undecaprenol N-acetylglucosamine transferase from Vibrio vulnificus (strain YJ016).